Consider the following 202-residue polypeptide: Virulence protein F (202 aa).

Polar residues predominate over residues 1 to 15; sequence MRNSSLRDASGSNDA. The segment at 1–21 is disordered; that stretch reads MRNSSLRDASGSNDAQVPHKT. An F-box domain is found at 20–42; sequence KTELLNLPDHVLTEVAKRLATNN.

As to quaternary structure, component of SCF(virF) E3 ubiquitin ligase complexes. Interacts with host VIP1 and SKP1A. Interacts with Arabidopsis thaliana ENAP1/VFP3 and VFP5 in the host cell nucleus.

It localises to the host nucleus. In terms of biological role, in the host plant, component of SCF(virF) E3 ubiquitin ligase complexes, which mediate the ubiquitination and subsequent proteasomal degradation of target proteins such as the host VIP1, after its implication in T-DNA translocation to the host nucleus. Required for the formation of tumors of a wild-type size on certain plant species only. This Agrobacterium tumefaciens (strain 15955) protein is Virulence protein F.